The following is a 439-amino-acid chain: Nuclear hormone receptor family member nhr-97 (439 aa).

The segment covering 1-13 (MSGDAQPSSNQRA) has biased composition (polar residues). Residues 1 to 22 (MSGDAQPSSNQRATEARPPPSP) are disordered. The segment at residues 32-108 (GALCVVCGDR…VGMKIEAVKM (77 aa)) is a DNA-binding region (nuclear receptor). 2 consecutive NR C4-type zinc fingers follow at residues 35 to 56 (CVVC…CHGC) and 72 to 96 (CRYG…FHRC). The tract at residues 112–135 (LTKRKKEKTDEDDTDDGGSHESFE) is disordered. Residues 173–408 (FVQPSLQNLL…GEGLLFWQLY (236 aa)) form the NR LBD domain.

Belongs to the nuclear hormone receptor family.

The protein resides in the nucleus. Its function is as follows. Orphan nuclear receptor. In Caenorhabditis elegans, this protein is Nuclear hormone receptor family member nhr-97 (nhr-97).